Consider the following 425-residue polypeptide: Trigger factor (425 aa).

The 86-residue stretch at 163–248 folds into the PPIase FKBP-type domain; it reads GDTAVIDFEG…IHEIKTKELP (86 aa).

This sequence belongs to the FKBP-type PPIase family. Tig subfamily.

It localises to the cytoplasm. The catalysed reaction is [protein]-peptidylproline (omega=180) = [protein]-peptidylproline (omega=0). Its function is as follows. Involved in protein export. Acts as a chaperone by maintaining the newly synthesized protein in an open conformation. Functions as a peptidyl-prolyl cis-trans isomerase. This Bacillus mycoides (strain KBAB4) (Bacillus weihenstephanensis) protein is Trigger factor.